We begin with the raw amino-acid sequence, 634 residues long: Sodium-dependent neutral amino acid transporter B(0)AT1 (634 aa).

At 1-41 (MVRLVLPNPGLEERIPSLDELEVIEKEEAGSRPKWDNKAQY) the chain is on the cytoplasmic side. A Phosphoserine modification is found at S17. The helical transmembrane segment at 42–62 (MLTCVGFCVGLGNVWRFPYLC) threads the bilayer. Over 63–67 (QSHGG) the chain is Extracellular. The helical transmembrane segment at 68-88 (GAFMIPFLILLVFEGIPLLYL) threads the bilayer. Residues 89–119 (EFAIGQRLRKGSMGVWSSIHPALKGIGIASM) lie on the Cytoplasmic side of the membrane. The helical transmembrane segment at 120-140 (FVSFMVGLYYNTIIAWVMWYF) threads the bilayer. Residues 141–192 (FNSFQEPLPWSECPLNQNQTGYVEECAKSSSVDYFWYRETLNISTSISDSGS) are Extracellular-facing. N-linked (GlcNAc...) asparagine glycans are attached at residues N158 and N182. The chain crosses the membrane as a helical span at residues 193 to 213 (IQWWILLCLTCAWSVLYVCII). Residues 214 to 221 (RGIETTGK) are Cytoplasmic-facing. A helical membrane pass occupies residues 222-242 (AVYITSTLPYVVLTIFLIRGL). Residues 243-268 (TLKGATNGIVFLFTPNITELSNPNTW) are Extracellular-facing. Residue N258 is glycosylated (N-linked (GlcNAc...) asparagine). A helical transmembrane segment spans residues 269-289 (LDAGAQVFYSFSLAFGGLISF). Topologically, residues 290–304 (SSYNSVHNNCEMDSV) are cytoplasmic. A helical membrane pass occupies residues 305 to 325 (IVSVINGFTSVYAATVVYSII). Residues 326-413 (GFRATERFDD…TEAITKMPVS (88 aa)) are Extracellular-facing. Residues N354 and N368 are each glycosylated (N-linked (GlcNAc...) asparagine). A helical membrane pass occupies residues 414–434 (PLWSVLFFIMLFCLGLSSMFG). The Cytoplasmic portion of the chain corresponds to 435-456 (NMEGVVVPLQDLNITPKKWPKE). Residues 457–477 (LLTGLICLGTYLIAFIFTLNS) form a helical membrane-spanning segment. At 478-487 (GQYWLSLLDS) the chain is on the extracellular side. Residues 488–508 (FAGSIPLLIIAFCEMFAVVYV) traverse the membrane as a helical segment. The Cytoplasmic portion of the chain corresponds to 509–531 (YGVDRFNKDIEFMIGHKPNIFWQ). The chain crosses the membrane as a helical span at residues 532–552 (VTWRVVSPLIMLVIFLFFFVI). Over 553–581 (EVNKTLMYSIWDPNYEEFPKSQKIPYPNW) the chain is Extracellular. N-linked (GlcNAc...) asparagine glycosylation is present at N555. A helical membrane pass occupies residues 582 to 602 (VYAVVVTVAGVPCLSIPCFAI). Residues 603-634 (YKFIRNCCQKSDDHHGLVNTLSTASVNGDLKN) lie on the Cytoplasmic side of the membrane. S627 is modified (phosphoserine).

It belongs to the sodium:neurotransmitter symporter (SNF) (TC 2.A.22) family. SLC6A19 subfamily. As to quaternary structure, interacts in a tissue-specific manner with ACE2 in small intestine and with CLTRN in the kidney. Interacts with CLTRN; this interaction is required for trafficking of SLC6A19 to the plasma membrane and for its catalytic activation in kidneys. Interacts with ACE2; this interaction is required for trafficking of SLC6A19 to the plasma membrane and for its catalytic activation in intestine. Interacts with ANPEP; the interaction positively regulates its amino acid transporter activity. Predominantly expressed in kidney and small intestine (at protein level). Expressed in the intestinal brush border (at protein level). Expression not observed in other organs, such as lung, skeletal muscle, brain, liver and pancreas. In kidney, expression is localized in the renal cortex but not in the medulla. Substantial amounts of expression in the proximal tubules. The distal nephron segments and the glomeruli are consistently negative. In the small intestine, expression is exclusively localized in villus enterocytes. High resolution of the hybridization-positive villi reveals a gradient of expression with the highest levels in apical cells. Not detected in crypt cells or in any other cell types of the small intestine.

The protein localises to the cell membrane. The catalysed reaction is L-alanine(in) + Na(+)(in) = L-alanine(out) + Na(+)(out). It carries out the reaction L-cysteine(in) + Na(+)(in) = L-cysteine(out) + Na(+)(out). It catalyses the reaction L-glutamine(in) + Na(+)(in) = L-glutamine(out) + Na(+)(out). The enzyme catalyses glycine(in) + Na(+)(in) = glycine(out) + Na(+)(out). The catalysed reaction is L-isoleucine(in) + Na(+)(in) = L-isoleucine(out) + Na(+)(out). It carries out the reaction L-leucine(in) + Na(+)(in) = L-leucine(out) + Na(+)(out). It catalyses the reaction L-methionine(in) + Na(+)(in) = L-methionine(out) + Na(+)(out). The enzyme catalyses L-phenylalanine(in) + Na(+)(in) = L-phenylalanine(out) + Na(+)(out). The catalysed reaction is L-serine(in) + Na(+)(in) = L-serine(out) + Na(+)(out). It carries out the reaction L-tryptophan(in) + Na(+)(in) = L-tryptophan(out) + Na(+)(out). It catalyses the reaction L-tyrosine(in) + Na(+)(in) = L-tyrosine(out) + Na(+)(out). The enzyme catalyses L-valine(in) + Na(+)(in) = L-valine(out) + Na(+)(out). Its function is as follows. Transporter that mediates resorption of neutral amino acids across the apical membrane of renal and intestinal epithelial cells. This uptake is sodium-dependent and chloride-independent. Requires CLTRN in kidney or ACE2 in intestine for cell surface expression and amino acid transporter activity. The sequence is that of Sodium-dependent neutral amino acid transporter B(0)AT1 (Slc6a19) from Mus musculus (Mouse).